Reading from the N-terminus, the 32-residue chain is MSDIN-like toxin proprotein 3 (32 aa).

A propeptide spanning residues Met-1–Pro-10 is cleaved from the precursor. The cyclopeptide (Ser-Pro) cross-link spans Ser-11–Pro-17. Residues Cys-18–Arg-32 constitute a propeptide that is removed on maturation.

The protein belongs to the MSDIN fungal toxin family. Processed by the macrocyclase-peptidase enzyme POPB to yield a toxic cyclic heptapeptide. POPB first removes 10 residues from the N-terminus. Conformational trapping of the remaining peptide forces the enzyme to release this intermediate rather than proceed to macrocyclization. The enzyme rebinds the remaining peptide in a different conformation and catalyzes macrocyclization of the N-terminal 8 residues.

Its function is as follows. Probable toxin that belongs to the MSDIN-like toxin family responsible for a large number of food poisoning cases and deaths. This is MSDIN-like toxin proprotein 3 from Amanita phalloides (Death cap).